The chain runs to 445 residues: Elongation factor 1-alpha (445 aa).

Residues 5-230 (KVHISLVVIG…DNLEPPKRPS (226 aa)) enclose the tr-type G domain. The segment at 14–21 (GHVDSGKS) is G1. GTP is bound at residue 14–21 (GHVDSGKS). The residue at position 55 (Lys55) is an N6,N6-dimethyllysine. The segment at 70-74 (CITID) is G2. Lys79 is subject to N6,N6,N6-trimethyllysine. Residues 91–94 (DAPG) form a G3 region. GTP contacts are provided by residues 91-95 (DAPGH) and 153-156 (NKFD). The tract at residues 153-156 (NKFD) is G4. At Lys187 the chain carries N6,N6,N6-trimethyllysine. Residues 194-196 (SGW) are G5. Lys261 carries the post-translational modification N6-methyllysine. 2 positions are modified to N6,N6,N6-trimethyllysine: Lys306 and Lys396.

Belongs to the TRAFAC class translation factor GTPase superfamily. Classic translation factor GTPase family. EF-Tu/EF-1A subfamily.

It localises to the cytoplasm. In terms of biological role, this protein promotes the GTP-dependent binding of aminoacyl-tRNA to the A-site of ribosomes during protein biosynthesis. This is Elongation factor 1-alpha (TEF) from Euglena gracilis.